We begin with the raw amino-acid sequence, 371 residues long: 4-hydroxy-3-methylbut-2-en-1-yl diphosphate synthase (flavodoxin) (371 aa).

[4Fe-4S] cluster-binding residues include cysteine 270, cysteine 273, cysteine 305, and glutamate 312.

It belongs to the IspG family. It depends on [4Fe-4S] cluster as a cofactor.

The enzyme catalyses (2E)-4-hydroxy-3-methylbut-2-enyl diphosphate + oxidized [flavodoxin] + H2O + 2 H(+) = 2-C-methyl-D-erythritol 2,4-cyclic diphosphate + reduced [flavodoxin]. The protein operates within isoprenoid biosynthesis; isopentenyl diphosphate biosynthesis via DXP pathway; isopentenyl diphosphate from 1-deoxy-D-xylulose 5-phosphate: step 5/6. Converts 2C-methyl-D-erythritol 2,4-cyclodiphosphate (ME-2,4cPP) into 1-hydroxy-2-methyl-2-(E)-butenyl 4-diphosphate. This chain is 4-hydroxy-3-methylbut-2-en-1-yl diphosphate synthase (flavodoxin), found in Shewanella denitrificans (strain OS217 / ATCC BAA-1090 / DSM 15013).